The following is a 101-amino-acid chain: Therostasin (101 aa).

An N-terminal signal peptide occupies residues 1–19; the sequence is MRGLAVLLLVACFCSVAFG. 2 Antistasin-like domains span residues 21–46 and 49–75; these read CENT…TCLC and CNDA…FCTC.

In terms of tissue distribution, salivary glands.

The protein localises to the secreted. In terms of biological role, potent inhibitor of factor Xa. It also inhibits trypsin in a weaker manner. This Theromyzon tessulatum (Duck leech) protein is Therostasin.